Reading from the N-terminus, the 403-residue chain is MSNLSSKLFRGNLVIRIAIGLVLGVLLAFISPEWAKSVGVLGQFFVKSLRAIAPILVFVLVLSAIANKEVGTDAKLKPILVMYVLGTFLAALTAVVFSFIFPTRLELVSSPGDLTPPQGIGEIIKTVVFNLVDNPLQALANANFIGILAWAIGLGIPLRYAAPSTKIFLNDLSEAVSYVVKMVISVAPIGVFGLVAETIATNGMNAFIGYARLLGVLLGAMMTVIFVLDPILVYWKIRRNPYPLTFICLRESGLTAFFTRSSAANIPVNMNLAKRLGVRDEIASVAIPLGATINMAGAAITVTVLTLAAAYTQGIYPDFMTALLLSIVASICACGASGVSGGSLLLIPLACSLFNIPNDIAAQVIGVGFIIGVIQDSAETALNSSTDVLFTTAVSQAEDRKES.

Transmembrane regions (helical) follow at residues 11 to 31 (GNLVIRIAIGLVLGVLLAFIS), 51 to 71 (AIAPILVFVLVLSAIANKEVG), 81 to 101 (VMYVLGTFLAALTAVVFSFIF), 138 to 158 (ALANANFIGILAWAIGLGIPL), 175 to 195 (AVSYVVKMVISVAPIGVFGLV), 213 to 233 (LLGVLLGAMMTVIFVLDPILV), 285 to 305 (VAIPLGATINMAGAAITVTVL), and 319 to 339 (FMTALLLSIVASICACGASGV).

The protein belongs to the dicarboxylate/amino acid:cation symporter (DAACS) (TC 2.A.23) family.

Its subcellular location is the cell inner membrane. The catalysed reaction is L-serine(in) + Na(+)(in) = L-serine(out) + Na(+)(out). It carries out the reaction L-threonine(in) + Na(+)(in) = L-threonine(out) + Na(+)(out). Its function is as follows. Involved in the import of serine and threonine into the cell, with the concomitant import of sodium (symport system). The polypeptide is Serine/threonine transporter SstT (Haemophilus ducreyi (strain 35000HP / ATCC 700724)).